The following is a 249-amino-acid chain: Secretion system apparatus lipoprotein SsaJ (249 aa).

The first 18 residues, 1 to 18, serve as a signal peptide directing secretion; sequence MKVHRIVFLTVLTFFLTA. A lipid anchor (N-palmitoyl cysteine) is attached at Cys-19. Cys-19 carries S-diacylglycerol cysteine lipidation. The helical transmembrane segment at 225–245 threads the bilayer; the sequence is LMLSLTGLLLGVGILIGYFCL.

It belongs to the YscJ lipoprotein family.

Its subcellular location is the cell outer membrane. In terms of biological role, component of Salmonella pathogenicity island 2 (SPI-2) type III secretion system, required for secretion of some type III-secreted effectors including the SpvB exotoxin. The sequence is that of Secretion system apparatus lipoprotein SsaJ (ssaJ) from Salmonella typhimurium (strain 14028s / SGSC 2262).